The primary structure comprises 489 residues: Trehalose-6-phosphate synthase (489 aa).

Position 22 (Arg-22) interacts with D-glucose 6-phosphate. 42–43 (GG) lines the UDP-alpha-D-glucose pocket. D-glucose 6-phosphate contacts are provided by Tyr-94 and Asp-148. Residues Arg-290 and Lys-295 each coordinate UDP-alpha-D-glucose. A D-glucose 6-phosphate-binding site is contributed by Arg-328. 393–397 (LVAKE) provides a ligand contact to UDP-alpha-D-glucose.

The protein belongs to the glycosyltransferase 20 family. In terms of assembly, homotetramer.

The catalysed reaction is ADP-alpha-D-glucose + D-glucose 6-phosphate = alpha,alpha-trehalose 6-phosphate + ADP + H(+). It carries out the reaction CDP-alpha-D-glucose + D-glucose 6-phosphate = alpha,alpha-trehalose 6-phosphate + CDP + H(+). It catalyses the reaction GDP-alpha-D-glucose + D-glucose 6-phosphate = alpha,alpha-trehalose 6-phosphate + GDP + H(+). The enzyme catalyses TDP-alpha-D-glucose + D-glucose 6-phosphate = 5-methyl-UDP + alpha,alpha-trehalose 6-phosphate + H(+). The catalysed reaction is D-glucose 6-phosphate + UDP-alpha-D-glucose = alpha,alpha-trehalose 6-phosphate + UDP + H(+). It participates in glycan biosynthesis; trehalose biosynthesis. Its function is as follows. Probably involved in the osmoprotection via the biosynthesis of trehalose and in the production of glycogen and alpha-glucan via the TreS-Pep2 branch involved in the biosynthesis of maltose-1-phosphate (M1P). Catalyzes the transfer of glucose from UDP-glucose (UDP-Glc) to D-glucose 6-phosphate (Glc-6-P) to form trehalose-6-phosphate. Probably also able to use ADP-Glc, CDP-Glc, GDP-Glc and TDP-Glc as glucosyl donors. This chain is Trehalose-6-phosphate synthase, found in Mycobacterium sp. (strain KMS).